Consider the following 418-residue polypeptide: Gamma-glutamyl phosphate reductase (418 aa).

It belongs to the gamma-glutamyl phosphate reductase family.

Its subcellular location is the cytoplasm. The catalysed reaction is L-glutamate 5-semialdehyde + phosphate + NADP(+) = L-glutamyl 5-phosphate + NADPH + H(+). The protein operates within amino-acid biosynthesis; L-proline biosynthesis; L-glutamate 5-semialdehyde from L-glutamate: step 2/2. Its function is as follows. Catalyzes the NADPH-dependent reduction of L-glutamate 5-phosphate into L-glutamate 5-semialdehyde and phosphate. The product spontaneously undergoes cyclization to form 1-pyrroline-5-carboxylate. The chain is Gamma-glutamyl phosphate reductase from Lacticaseibacillus paracasei (strain ATCC 334 / BCRC 17002 / CCUG 31169 / CIP 107868 / KCTC 3260 / NRRL B-441) (Lactobacillus paracasei).